A 184-amino-acid polypeptide reads, in one-letter code: Casparian strip membrane protein 3 (184 aa).

Residues 1–24 (MEGSEEHGETSKAPLSRGVSKGVS) lie on the Cytoplasmic side of the membrane. The helical transmembrane segment at 25–45 (ILDVILRFVAIIGTLASAIAM) threads the bilayer. Residues 46 to 72 (GTTNQTLPFFTQFIRFKAQYSDLPTLT) are Extracellular-facing. N-linked (GlcNAc...) asparagine glycosylation occurs at Asn49. A helical membrane pass occupies residues 73–93 (FFVVANSIVSAYLILSLPLSI). Residues 94–105 (VHVIRSRAKYSR) lie on the Cytoplasmic side of the membrane. The helical transmembrane segment at 106–126 (LILIFFDAAMLALVTAGASAA) threads the bilayer. Over 127-159 (AAIVYLAHKGNARANWLAICQQFDSFCERISGS) the chain is Extracellular. A helical membrane pass occupies residues 160–180 (LIGSFAAMVVLVLLIFLSAIA). Topologically, residues 181–184 (LARR) are cytoplasmic.

It belongs to the Casparian strip membrane proteins (CASP) family. As to quaternary structure, homodimer and heterodimers.

It localises to the cell membrane. In terms of biological role, regulates membrane-cell wall junctions and localized cell wall deposition. Required for establishment of the Casparian strip membrane domain (CSD) and the subsequent formation of Casparian strips, a cell wall modification of the root endodermis that determines an apoplastic barrier between the intraorganismal apoplasm and the extraorganismal apoplasm and prevents lateral diffusion. The sequence is that of Casparian strip membrane protein 3 from Oryza sativa subsp. indica (Rice).